Reading from the N-terminus, the 372-residue chain is Lipoyl synthase, mitochondrial (372 aa).

A mitochondrion-targeting transit peptide spans M1 to P27. [4Fe-4S] cluster is bound by residues C106, C111, C117, C137, C141, C144, and S352. The Radical SAM core domain maps to E122–H341.

It belongs to the radical SAM superfamily. Lipoyl synthase family. The cofactor is [4Fe-4S] cluster.

Its subcellular location is the mitochondrion. The catalysed reaction is [[Fe-S] cluster scaffold protein carrying a second [4Fe-4S](2+) cluster] + N(6)-octanoyl-L-lysyl-[protein] + 2 oxidized [2Fe-2S]-[ferredoxin] + 2 S-adenosyl-L-methionine + 4 H(+) = [[Fe-S] cluster scaffold protein] + N(6)-[(R)-dihydrolipoyl]-L-lysyl-[protein] + 4 Fe(3+) + 2 hydrogen sulfide + 2 5'-deoxyadenosine + 2 L-methionine + 2 reduced [2Fe-2S]-[ferredoxin]. It functions in the pathway protein modification; protein lipoylation via endogenous pathway; protein N(6)-(lipoyl)lysine from octanoyl-[acyl-carrier-protein]: step 2/2. Its function is as follows. Catalyzes the radical-mediated insertion of two sulfur atoms into the C-6 and C-8 positions of the octanoyl moiety bound to the lipoyl domains of lipoate-dependent enzymes, thereby converting the octanoylated domains into lipoylated derivatives. In Homo sapiens (Human), this protein is Lipoyl synthase, mitochondrial.